Consider the following 448-residue polypeptide: UDP-N-acetylmuramoyl-L-alanine--L-glutamate ligase (448 aa).

ATP is bound at residue 118–124 (GSKGKST).

It belongs to the MurCDEF family. MurD2 subfamily.

Its subcellular location is the cytoplasm. It catalyses the reaction UDP-N-acetyl-alpha-D-muramoyl-L-alanine + L-glutamate + ATP = UDP-N-acetyl-alpha-D-muramoyl-L-alanyl-L-glutamate + ADP + phosphate + H(+). It participates in cell wall biogenesis; peptidoglycan biosynthesis. Cell wall formation. Catalyzes the addition of L-glutamate to the nucleotide precursor UDP-N-acetylmuramoyl-L-alanine. In Salinispora tropica (strain ATCC BAA-916 / DSM 44818 / JCM 13857 / NBRC 105044 / CNB-440), this protein is UDP-N-acetylmuramoyl-L-alanine--L-glutamate ligase.